The following is a 545-amino-acid chain: Membrane protein insertase YidC (545 aa).

Residues 6–26 (NLLLIALLFVSFMIWQAWQTD) form a helical membrane-spanning segment. A disordered region spans residues 31-54 (PVAQTTQQTSNPATGDAASSAVPA). Transmembrane regions (helical) follow at residues 342-362 (KFIH…TFIV), 417-437 (LGGC…YYML), 455-475 (LSAQ…MFFI), and 496-516 (PVIF…YYIV).

This sequence belongs to the OXA1/ALB3/YidC family. Type 1 subfamily. Interacts with the Sec translocase complex via SecD. Specifically interacts with transmembrane segments of nascent integral membrane proteins during membrane integration.

Its subcellular location is the cell inner membrane. Functionally, required for the insertion and/or proper folding and/or complex formation of integral membrane proteins into the membrane. Involved in integration of membrane proteins that insert both dependently and independently of the Sec translocase complex, as well as at least some lipoproteins. Aids folding of multispanning membrane proteins. The sequence is that of Membrane protein insertase YidC from Serratia proteamaculans (strain 568).